The chain runs to 369 residues: ATP-dependent 6-phosphofructokinase (369 aa).

Residues Gly15, 81-82, and 108-111 contribute to the ATP site; these read KG and GDGS. Asp109 is a Mg(2+) binding site. Residues 132 to 134, Arg169, 176 to 178, Glu230, Arg266, and 272 to 275 each bind substrate; these read TID, MGR, and HIQR. Asp134 functions as the Proton acceptor in the catalytic mechanism.

Belongs to the phosphofructokinase type A (PFKA) family. Mixed-substrate PFK group III subfamily. Homodimer or homotetramer. Mg(2+) serves as cofactor.

The protein resides in the cytoplasm. It catalyses the reaction beta-D-fructose 6-phosphate + ATP = beta-D-fructose 1,6-bisphosphate + ADP + H(+). It functions in the pathway carbohydrate degradation; glycolysis; D-glyceraldehyde 3-phosphate and glycerone phosphate from D-glucose: step 3/4. Its function is as follows. Catalyzes the phosphorylation of D-fructose 6-phosphate to fructose 1,6-bisphosphate by ATP, the first committing step of glycolysis. This is ATP-dependent 6-phosphofructokinase from Thermosynechococcus vestitus (strain NIES-2133 / IAM M-273 / BP-1).